We begin with the raw amino-acid sequence, 356 residues long: DNA polymerase IV (356 aa).

Residues 7 to 187 (IIHVDMDAFY…LPVNRVPGVG (181 aa)) enclose the UmuC domain. Mg(2+)-binding residues include D11 and D105. E106 is a catalytic residue.

This sequence belongs to the DNA polymerase type-Y family. In terms of assembly, monomer. Requires Mg(2+) as cofactor.

The protein resides in the cytoplasm. It carries out the reaction DNA(n) + a 2'-deoxyribonucleoside 5'-triphosphate = DNA(n+1) + diphosphate. Functionally, poorly processive, error-prone DNA polymerase involved in untargeted mutagenesis. Copies undamaged DNA at stalled replication forks, which arise in vivo from mismatched or misaligned primer ends. These misaligned primers can be extended by PolIV. Exhibits no 3'-5' exonuclease (proofreading) activity. May be involved in translesional synthesis, in conjunction with the beta clamp from PolIII. The polypeptide is DNA polymerase IV (Stenotrophomonas maltophilia (strain R551-3)).